We begin with the raw amino-acid sequence, 356 residues long: Alpha-N-acetylneuraminide alpha-2,8-sialyltransferase (356 aa).

Over 1 to 29 the chain is Cytoplasmic; that stretch reads MSPCGRARRQTSRGAMAVLAWKFPRTRLP. Residues 30–48 form a helical; Signal-anchor for type II membrane protein membrane-spanning segment; that stretch reads MGASALCVVVLCWLYIFPV. At 49 to 356 the chain is on the lumenal side; it reads YRLPNEKEIV…CEDTSLQPTS (308 aa). Residues N71 and N119 are each glycosylated (N-linked (GlcNAc...) asparagine). 2 disulfide bridges follow: C138–C287 and C152–C347. N143 and N166 together coordinate CMP-N-acetyl-beta-neuraminate. 2 N-linked (GlcNAc...) asparagine glycosylation sites follow: N214 and N245. Positions 274, 275, 276, 296, and 310 each coordinate CMP-N-acetyl-beta-neuraminate. H322 acts as the Proton donor/acceptor in catalysis.

This sequence belongs to the glycosyltransferase 29 family. In terms of tissue distribution, strongly expressed in melanoma cell lines, adult and fetal brain and to a lesser extent in adult and fetal lung.

Its subcellular location is the golgi apparatus membrane. It catalyses the reaction an N-acetyl-alpha-neuraminyl-(2-&gt;3)-beta-D-galactosyl derivative + CMP-N-acetyl-beta-neuraminate = an N-acetyl-alpha-neuraminyl-(2-&gt;8)-N-acetyl-alpha-neuraminyl-(2-&gt;3)-beta-D-galactosyl derivative + CMP + H(+). The enzyme catalyses a ganglioside GM3 (d18:1(4E)) + CMP-N-acetyl-beta-neuraminate = a ganglioside GD3 (d18:1(4E)) + CMP + H(+). The catalysed reaction is a ganglioside GD3 (d18:1(4E)) + CMP-N-acetyl-beta-neuraminate = a ganglioside GT3 (d18:1(4E)) + CMP + H(+). It carries out the reaction a ganglioside GD1a (d18:1(4E)) + CMP-N-acetyl-beta-neuraminate = a ganglioside GT1a (d18:1(4E)) + CMP + H(+). It catalyses the reaction a ganglioside GT1b (d18:1(4E)) + CMP-N-acetyl-beta-neuraminate = a ganglioside GQ1b (d18:1(4E)) + CMP + H(+). The enzyme catalyses a ganglioside GM1b (d18:1(4E)) + CMP-N-acetyl-beta-neuraminate = a ganglioside GD1c (d18:1(4E)) + CMP + H(+). The catalysed reaction is a ganglioside GD3 + CMP-N-acetyl-beta-neuraminate = a ganglioside GT3 + CMP + H(+). It carries out the reaction [alpha-N-acetylneuraminyl-(2-&gt;8)](n)-alpha-N-acetylneuraminyl-(2-&gt;8)-alpha-N-acetylneuraminyl-(2-&gt;3)-beta-D-galactosyl-(1-&gt;4)-beta-D-glucosyl-(1&lt;-&gt;1)-ceramide + CMP-N-acetyl-beta-neuraminate = [alpha-N-acetylneuraminyl-(2-&gt;8)](n+1)-alpha-N-acetylneuraminyl-(2-&gt;8)-alpha-N-acetylneuraminyl-(2-&gt;3)-beta-D-galactosyl-(1-&gt;4)-beta-D-glucosyl-(1&lt;-&gt;1)-ceramide + CMP + H(+). The protein operates within protein modification; protein glycosylation. It participates in lipid metabolism; sphingolipid metabolism. In terms of biological role, catalyzes the addition of sialic acid in alpha 2,8-linkage to the sialic acid moiety of the ganglioside GM3 to form ganglioside GD3; gangliosides are a subfamily of complex glycosphingolipds that contain one or more residues of sialic acid. Can catalyze the addition of a second alpha-2,8-sialic acid to GD3 to form GT3. Can use GM1b, GD1a and GT1b as acceptor substrates to synthesize GD1c, GT1a and GQ1b respectively. Can synthesize unusual tetra- and pentasialylated lactosylceramide derivatives identified as GQ3 (II3Neu5Ac4-Gg2Cer) and GP3 (II3Neu5Ac5-Gg2Cer) in breast cancer cells. The polypeptide is Alpha-N-acetylneuraminide alpha-2,8-sialyltransferase (Homo sapiens (Human)).